Consider the following 62-residue polypeptide: U8-theraphotoxin-Cg1a 2 (62 aa).

The N-terminal stretch at 1-21 (MKTLVLFIIFGLAALFLLSSA) is a signal peptide. Positions 22 to 29 (TELEETER) are excised as a propeptide. Cystine bridges form between Cys-31-Cys-46, Cys-38-Cys-51, and Cys-45-Cys-58.

This sequence belongs to the neurotoxin 10 (Hwtx-1) family. 30 (Jztx-14) subfamily. In terms of tissue distribution, expressed by the venom gland.

It is found in the secreted. In terms of biological role, probable ion channel inhibitor. The polypeptide is U8-theraphotoxin-Cg1a 2 (Chilobrachys guangxiensis (Chinese earth tiger tarantula)).